The sequence spans 195 residues: Imidazoleglycerol-phosphate dehydratase (195 aa).

It belongs to the imidazoleglycerol-phosphate dehydratase family.

It is found in the cytoplasm. It carries out the reaction D-erythro-1-(imidazol-4-yl)glycerol 3-phosphate = 3-(imidazol-4-yl)-2-oxopropyl phosphate + H2O. The protein operates within amino-acid biosynthesis; L-histidine biosynthesis; L-histidine from 5-phospho-alpha-D-ribose 1-diphosphate: step 6/9. This chain is Imidazoleglycerol-phosphate dehydratase, found in Roseobacter denitrificans (strain ATCC 33942 / OCh 114) (Erythrobacter sp. (strain OCh 114)).